Here is a 385-residue protein sequence, read N- to C-terminus: Beta-lactamase (385 aa).

Positions 1–20 are cleaved as a signal peptide; sequence MKRLLAFCLLFFAALGQAKV. Catalysis depends on Ser-84, which acts as the Acyl-ester intermediate. Catalysis depends on Tyr-170, which acts as the Proton acceptor. 335 to 337 is a substrate binding site; the sequence is KTG.

Belongs to the class-C beta-lactamase family.

It is found in the periplasm. It catalyses the reaction a beta-lactam + H2O = a substituted beta-amino acid. Functionally, this protein is a serine beta-lactamase with a substrate specificity for cephalosporins. This is Beta-lactamase from Lysobacter lactamgenus.